We begin with the raw amino-acid sequence, 651 residues long: Transcription factor E2-alpha (651 aa).

3 disordered regions span residues 32–107, 131–208, and 341–378; these read ANGK…SERN, LSLS…KTPS, and DHSS…ALSP. 3 stretches are compositionally biased toward low complexity: residues 56 to 73, 131 to 148, and 341 to 354; these read SSGS…FDPS, LSLS…KSSS, and DHSS…PSTP. Ser-135 and Ser-140 each carry phosphoserine. Residue Thr-353 is modified to Phosphothreonine. Ser-357 is modified (phosphoserine). Arg-369 carries the omega-N-methylarginine modification. Ser-377 carries the post-translational modification Phosphoserine. Residues 387 to 422 are leucine-zipper; the sequence is LSKMEDRLDEAIHVLRSHAVGTASDLHGLLPGHGAL. The disordered stretch occupies residues 457–549; the sequence is HNHASLPSQP…KAEREKERRV (93 aa). Residues 461–479 are compositionally biased toward low complexity; it reads SLPSQPSSLPDLSQRPPDS. Lys-496 participates in a covalent cross-link: Glycyl lysine isopeptide (Lys-Gly) (interchain with G-Cter in SUMO2). Ser-526 is modified (phosphoserine). Residue Asp-528 is modified to Phosphothreonine. Asp-533 is subject to Phosphoserine. Positions 539–549 are enriched in basic and acidic residues; the sequence is QKAEREKERRV. Residues 546 to 599 enclose the bHLH domain; it reads ERRVANNARERLRVRDINEAFKELGRMCQLHLSSEKPQTKLLILHQAVAVILSL. Residue Lys-622 forms a Glycyl lysine isopeptide (Lys-Gly) (interchain with G-Cter in SUMO2) linkage.

In terms of assembly, homodimer. Heterodimer; efficient DNA binding requires dimerization with another bHLH protein. Forms a heterodimer with TWIST1 and TWIST2. Forms a heterodimer with NEUROD1; the heterodimer is inhibited in presence of ID2, but not NR0B2, to E-box element. Forms a heterodimer with TCF15; the heterodimer binds E-box element. Forms a heterodimer with MYOG; heterodimerization enhances MYOG DNA-binding and transcriptional activities. Forms a heterodimer with ATOH8; repress transcription of TCF3 and TCF3-NEUROG3 dimer-induced transactivation of E box-dependent promoters. Component of a nuclear TAL-1 complex composed at least of CBFA2T3, LDB1, TAL1 and TCF3. Interacts with NEUROD2. Interacts with EP300. Interacts with PTF1A, TGFB1I1 and UBE2I. Interacts with BHLHA9. Interacts with ASB2; the interaction is mediated by SKP2 and targets TCF3 for Notch-induced proteasomal degradation. Interacts with transcription factor ASCL5/AmeloD. As to quaternary structure, forms a heterodimer with ATOH7; required for ATOH7 DNA-binding. Interacts with RALGAPA1. Interacts with FIGLA. In terms of processing, phosphorylated following NGF stimulation. Post-translationally, undergoes Notch-induced ubiquitination and subsequent proteasomal degradation which is mediated by ASB1 or ASB2, the substrate-recognition components of probable ECS E3 ubiquitin-protein ligase complexes.

It is found in the nucleus. In terms of biological role, transcriptional regulator involved in the initiation of neuronal differentiation and mesenchymal to epithelial transition. Heterodimers between TCF3 and tissue-specific basic helix-loop-helix (bHLH) proteins play major roles in determining tissue-specific cell fate during embryogenesis, like muscle or early B-cell differentiation. Together with TCF15, required for the mesenchymal to epithelial transition. Dimers bind DNA on E-box motifs: 5'-CANNTG-3'. Binds to the kappa-E2 site in the kappa immunoglobulin gene enhancer. Binds to IEB1 and IEB2, which are short DNA sequences in the insulin gene transcription control region. Functionally, facilitates ATOH7 binding to DNA at the consensus sequence 5'-CAGGTG-3', and positively regulates transcriptional activity. This chain is Transcription factor E2-alpha (Tcf3), found in Mus musculus (Mouse).